Here is a 416-residue protein sequence, read N- to C-terminus: Phosphoglycerate kinase (416 aa).

Substrate contacts are provided by residues Asp-24–Asn-26, Arg-40, His-63–Arg-66, Arg-122, and Arg-162. ATP contacts are provided by residues Lys-212, Gly-300, Glu-331, and Gly-360–Ser-363.

The protein belongs to the phosphoglycerate kinase family. In terms of assembly, monomer.

It localises to the cytoplasm. It catalyses the reaction (2R)-3-phosphoglycerate + ATP = (2R)-3-phospho-glyceroyl phosphate + ADP. Its pathway is carbohydrate degradation; glycolysis; pyruvate from D-glyceraldehyde 3-phosphate: step 2/5. The sequence is that of Phosphoglycerate kinase from Mycobacterium ulcerans (strain Agy99).